The following is a 345-amino-acid chain: MTQLTIITPDDWHLHFRDGDMLQETVPATARLFNRAIVMPNLLPPVTDAKLASAYRERILAARPAGSTFEPLMTIFLTNNTTEQDIIDAKAAGVVAAKLYPAGATTNSDAAVKALDALFPIFEAMEKHGLLLLVHGEVTESHIDIFDREALFIERYLARIVNAFPGLKVVFEHITTKDAADFVMSAADNVAATITPQHLLLNRNDLLVGGVRPHNFCLPVLKRSTHQEALRAVVATGSSKFFLGTDSAPHEKHRKESACGCAGCYSAWSALELYAQVFDDLGALDKLEGFASIHGPDFYGLPRNTGSVTLVKETWTVPSEIILPNGNPIVPFFAGEEVSWKVKTA.

Zn(2+) is bound by residues H13 and H15. Substrate is bound by residues 15–17 (HFR) and N41. Zn(2+) is bound by residues K98, H135, and H173. K98 is subject to N6-carboxylysine. H135 is a binding site for substrate. Residue L218 coordinates substrate. A Zn(2+)-binding site is contributed by D246. D246 is an active-site residue. Substrate is bound by residues H250 and A262.

The protein belongs to the metallo-dependent hydrolases superfamily. DHOase family. Class II DHOase subfamily. As to quaternary structure, homodimer. Zn(2+) serves as cofactor.

It catalyses the reaction (S)-dihydroorotate + H2O = N-carbamoyl-L-aspartate + H(+). It functions in the pathway pyrimidine metabolism; UMP biosynthesis via de novo pathway; (S)-dihydroorotate from bicarbonate: step 3/3. Its function is as follows. Catalyzes the reversible cyclization of carbamoyl aspartate to dihydroorotate. The polypeptide is Dihydroorotase (Shewanella piezotolerans (strain WP3 / JCM 13877)).